The following is a 117-amino-acid chain: Large ribosomal subunit protein bL20 (117 aa).

Belongs to the bacterial ribosomal protein bL20 family.

Its function is as follows. Binds directly to 23S ribosomal RNA and is necessary for the in vitro assembly process of the 50S ribosomal subunit. It is not involved in the protein synthesizing functions of that subunit. The protein is Large ribosomal subunit protein bL20 of Vibrio metschnikovii.